The following is a 317-amino-acid chain: R-phycoerythrin gamma chain, chloroplastic (317 aa).

The N-terminal 40 residues, 1 to 40 (MASPAFAVNGMFTPVKLSGSFTASMPVDSKPAASATGVRM), are a transit peptide targeting the chloroplast. Residues cysteine 94 and cysteine 133 each contribute to the phycourobilin site. Cysteine 210 provides a ligand contact to (2R,3E)-phycoerythrobilin. Residue cysteine 297 coordinates phycourobilin.

As to quaternary structure, heteromer of 1 alpha, 1 beta and 2 gamma chains. Post-translationally, contains four covalently linked bilin chromophores.

The protein localises to the plastid. The protein resides in the chloroplast thylakoid membrane. Critical for the incorporation of phycoerythrin in the phycobilisome complex. The protein is R-phycoerythrin gamma chain, chloroplastic of Aglaothamnion neglectum (Red alga).